We begin with the raw amino-acid sequence, 615 residues long: Chaperone protein DnaK (615 aa).

Residue T175 is modified to Phosphothreonine; by autocatalysis. The segment at 573–615 is disordered; the sequence is SQEMYQKAAQEQQAAQGAEQAQDNGPKDDNVVDADFKEVDEDK. Over residues 580–594 the composition is skewed to low complexity; sequence AAQEQQAAQGAEQAQ. Over residues 597–609 the composition is skewed to basic and acidic residues; the sequence is GPKDDNVVDADFK.

Belongs to the heat shock protein 70 family.

In terms of biological role, acts as a chaperone. The protein is Chaperone protein DnaK of Clostridioides difficile (strain 630) (Peptoclostridium difficile).